The chain runs to 655 residues: Acetyl-coenzyme A synthetase (655 aa).

Residues 193-196 (RGNK) and Thr-313 contribute to the CoA site. ATP contacts are provided by residues 389 to 391 (GEP), 413 to 418 (DTWWQT), Asp-502, and Arg-517. Ser-525 provides a ligand contact to CoA. Arg-528 contacts ATP. Val-539 and His-541 together coordinate Mg(2+). CoA is bound at residue Arg-586. An N6-acetyllysine modification is found at Lys-611.

This sequence belongs to the ATP-dependent AMP-binding enzyme family. Requires Mg(2+) as cofactor. In terms of processing, acetylated. Deacetylation by the SIR2-homolog deacetylase activates the enzyme.

It carries out the reaction acetate + ATP + CoA = acetyl-CoA + AMP + diphosphate. In terms of biological role, catalyzes the conversion of acetate into acetyl-CoA (AcCoA), an essential intermediate at the junction of anabolic and catabolic pathways. AcsA undergoes a two-step reaction. In the first half reaction, AcsA combines acetate with ATP to form acetyl-adenylate (AcAMP) intermediate. In the second half reaction, it can then transfer the acetyl group from AcAMP to the sulfhydryl group of CoA, forming the product AcCoA. The sequence is that of Acetyl-coenzyme A synthetase from Psychrobacter cryohalolentis (strain ATCC BAA-1226 / DSM 17306 / VKM B-2378 / K5).